A 226-amino-acid chain; its full sequence is LexA repressor (226 aa).

Positions 28–48 (RAEICQSLGFRSPNAAESHLR) form a DNA-binding region, H-T-H motif. Catalysis depends on for autocatalytic cleavage activity residues Ser133 and Lys170.

This sequence belongs to the peptidase S24 family. In terms of assembly, homodimer.

The catalysed reaction is Hydrolysis of Ala-|-Gly bond in repressor LexA.. Functionally, represses a number of genes involved in the response to DNA damage (SOS response), including recA and lexA. In the presence of single-stranded DNA, RecA interacts with LexA causing an autocatalytic cleavage which disrupts the DNA-binding part of LexA, leading to derepression of the SOS regulon and eventually DNA repair. The protein is LexA repressor of Halorhodospira halophila (strain DSM 244 / SL1) (Ectothiorhodospira halophila (strain DSM 244 / SL1)).